The primary structure comprises 421 residues: L-evernosamine nitrososynthase (421 aa).

Belongs to the acyl-CoA dehydrogenase family. In terms of assembly, homotetramer. FAD serves as cofactor.

The enzyme catalyses dTDP-beta-L-evernosamine + 2 NADPH + 2 O2 + H(+) = dTDP-2,3,6-trideoxy-3-C-methyl-4-O-methyl-3-nitroso-beta-L-arabino-hexopyranose + 2 NADP(+) + 3 H2O. It carries out the reaction dTDP-beta-L-evernosamine + NADPH + O2 = dTDP-N-hydroxy-beta-L-evernosamine + NADP(+) + H2O. The catalysed reaction is dTDP-N-hydroxy-beta-L-evernosamine + NADPH + O2 + H(+) = dTDP-2,3,6-trideoxy-3-C-methyl-4-O-methyl-3-nitroso-beta-L-arabino-hexopyranose + NADP(+) + 2 H2O. It participates in antibiotic biosynthesis. Its function is as follows. Nitrososynthase involved in the biosynthesis of everninomicin, a broad spectrum orthosomycin antibiotic. Catalyzes the double-oxidation of TDP-L-evernosamine to TDP-L-evernitrosose. The enzyme first oxidizes the substrate to a transient hydroxylamino intermediate, which is then further oxidized to nitroso sugar. The nitroso group is probably spontaneously oxidized giving TDP-L-evernitrose. In vitro, catalyzes the double-oxidation of TDP-L-epi-vancosamine to TDP-L-epi-vancosonitrose. Can also use biosynthetic progenitors of TDP-L-epi-vancosamine, but progenitors solely undergo single-oxidation reactions and terminate in the hydroxylamine oxidation state. The protein is L-evernosamine nitrososynthase of Micromonospora sp. (strain ATCC 39149 / NRRL 15099 / SCC 1413).